The sequence spans 436 residues: Proteasome-activating nucleotidase (436 aa).

Positions 15 to 97 form a coiled coil; it reads EELCRLYRSL…LKSESEQLRS (83 aa). ATP contacts are provided by residues 222-227 and histidine 361; that span reads GTGKTL. Residues 434 to 436 form a docks into pockets in the proteasome alpha-ring to cause gate opening region; the sequence is MFA.

The protein belongs to the AAA ATPase family. In terms of assembly, homohexamer. The hexameric complex has a two-ring architecture resembling a top hat that caps the 20S proteasome core at one or both ends. Upon ATP-binding, the C-terminus of PAN interacts with the alpha-rings of the proteasome core by binding to the intersubunit pockets.

Its subcellular location is the cytoplasm. Functionally, ATPase which is responsible for recognizing, binding, unfolding and translocation of substrate proteins into the archaeal 20S proteasome core particle. Is essential for opening the gate of the 20S proteasome via an interaction with its C-terminus, thereby allowing substrate entry and access to the site of proteolysis. Thus, the C-termini of the proteasomal ATPase function like a 'key in a lock' to induce gate opening and therefore regulate proteolysis. Unfolding activity requires energy from ATP hydrolysis, whereas ATP binding alone promotes ATPase-20S proteasome association which triggers gate opening, and supports translocation of unfolded substrates. The protein is Proteasome-activating nucleotidase of Methanoregula boonei (strain DSM 21154 / JCM 14090 / 6A8).